We begin with the raw amino-acid sequence, 551 residues long: Methionine--tRNA ligase (551 aa).

The short motif at 12-22 (PYANGPLHFGH) is the 'HIGH' region element. Cysteine 144, cysteine 147, cysteine 157, and cysteine 160 together coordinate Zn(2+). The 'KMSKS' region motif lies at 330–334 (QFSKS). Residue lysine 333 coordinates ATP.

The protein belongs to the class-I aminoacyl-tRNA synthetase family. MetG type 1 subfamily. As to quaternary structure, monomer. Zn(2+) serves as cofactor.

The protein localises to the cytoplasm. The catalysed reaction is tRNA(Met) + L-methionine + ATP = L-methionyl-tRNA(Met) + AMP + diphosphate. Functionally, is required not only for elongation of protein synthesis but also for the initiation of all mRNA translation through initiator tRNA(fMet) aminoacylation. The sequence is that of Methionine--tRNA ligase from Chlamydia abortus (strain DSM 27085 / S26/3) (Chlamydophila abortus).